A 431-amino-acid polypeptide reads, in one-letter code: UDP-N-acetylglucosamine--N-acetylmuramyl-(pentapeptide) pyrophosphoryl-undecaprenol N-acetylglucosamine transferase (431 aa).

Residues 29-31 (TGG), Asn-141, Arg-177, Ser-205, Ile-258, and Gln-303 contribute to the UDP-N-acetyl-alpha-D-glucosamine site. The disordered stretch occupies residues 370 to 431 (AGSGDGQPPA…NPGASAGGAP (62 aa)). Residues 395–420 (KQGSMQTSVNGDRSAQLIATNPQSRL) show a composition bias toward polar residues.

The protein belongs to the glycosyltransferase 28 family. MurG subfamily.

It localises to the cell inner membrane. It catalyses the reaction di-trans,octa-cis-undecaprenyl diphospho-N-acetyl-alpha-D-muramoyl-L-alanyl-D-glutamyl-meso-2,6-diaminopimeloyl-D-alanyl-D-alanine + UDP-N-acetyl-alpha-D-glucosamine = di-trans,octa-cis-undecaprenyl diphospho-[N-acetyl-alpha-D-glucosaminyl-(1-&gt;4)]-N-acetyl-alpha-D-muramoyl-L-alanyl-D-glutamyl-meso-2,6-diaminopimeloyl-D-alanyl-D-alanine + UDP + H(+). It functions in the pathway cell wall biogenesis; peptidoglycan biosynthesis. Its function is as follows. Cell wall formation. Catalyzes the transfer of a GlcNAc subunit on undecaprenyl-pyrophosphoryl-MurNAc-pentapeptide (lipid intermediate I) to form undecaprenyl-pyrophosphoryl-MurNAc-(pentapeptide)GlcNAc (lipid intermediate II). The protein is UDP-N-acetylglucosamine--N-acetylmuramyl-(pentapeptide) pyrophosphoryl-undecaprenol N-acetylglucosamine transferase of Xanthomonas euvesicatoria pv. vesicatoria (strain 85-10) (Xanthomonas campestris pv. vesicatoria).